A 234-amino-acid polypeptide reads, in one-letter code: Orotidine 5'-phosphate decarboxylase (234 aa).

Residues D10, K31, 58-67 (DLKLHDIPNT), T121, R183, Q192, G212, and R213 each bind substrate. K60 functions as the Proton donor in the catalytic mechanism.

Belongs to the OMP decarboxylase family. Type 1 subfamily. As to quaternary structure, homodimer.

It carries out the reaction orotidine 5'-phosphate + H(+) = UMP + CO2. The protein operates within pyrimidine metabolism; UMP biosynthesis via de novo pathway; UMP from orotate: step 2/2. Functionally, catalyzes the decarboxylation of orotidine 5'-monophosphate (OMP) to uridine 5'-monophosphate (UMP). This Lysinibacillus sphaericus (strain C3-41) protein is Orotidine 5'-phosphate decarboxylase.